Here is a 102-residue protein sequence, read N- to C-terminus: Small ribosomal subunit protein uS10 (102 aa).

Belongs to the universal ribosomal protein uS10 family. Part of the 30S ribosomal subunit.

In terms of biological role, involved in the binding of tRNA to the ribosomes. This Trichlorobacter lovleyi (strain ATCC BAA-1151 / DSM 17278 / SZ) (Geobacter lovleyi) protein is Small ribosomal subunit protein uS10.